A 276-amino-acid chain; its full sequence is NAD-capped RNA hydrolase NudC (276 aa).

Arg-82 contributes to the substrate binding site. Residues Cys-112 and Cys-115 each contribute to the Zn(2+) site. Glu-125 contributes to the substrate binding site. Residues Cys-130 and Cys-133 each coordinate Zn(2+). Residue Tyr-138 participates in substrate binding. The Nudix hydrolase domain occupies 139–262 (PRISPSMIVL…SIARYLIDLY (124 aa)). Residues Ala-172, Glu-188, and Glu-192 each contribute to the a divalent metal cation site. The Nudix box signature appears at 173–194 (GFAEPGESAEDCLVREVREEVA). 206-213 (QCWPFPHS) serves as a coordination point for substrate. Residue Glu-233 participates in a divalent metal cation binding. Ala-255 is a binding site for substrate.

The protein belongs to the Nudix hydrolase family. NudC subfamily. Homodimer. Mg(2+) serves as cofactor. Requires Mn(2+) as cofactor. The cofactor is Zn(2+).

The enzyme catalyses a 5'-end NAD(+)-phospho-ribonucleoside in mRNA + H2O = a 5'-end phospho-adenosine-phospho-ribonucleoside in mRNA + beta-nicotinamide D-ribonucleotide + 2 H(+). It catalyses the reaction NAD(+) + H2O = beta-nicotinamide D-ribonucleotide + AMP + 2 H(+). It carries out the reaction NADH + H2O = reduced beta-nicotinamide D-ribonucleotide + AMP + 2 H(+). In terms of biological role, mRNA decapping enzyme that specifically removes the nicotinamide adenine dinucleotide (NAD) cap from a subset of mRNAs by hydrolyzing the diphosphate linkage to produce nicotinamide mononucleotide (NMN) and 5' monophosphate mRNA. The NAD-cap is present at the 5'-end of some mRNAs and stabilizes RNA against 5'-processing. Has preference for mRNAs with a 5'-end purine. Catalyzes the hydrolysis of a broad range of dinucleotide pyrophosphates. This Pseudomonas putida (strain GB-1) protein is NAD-capped RNA hydrolase NudC.